A 69-amino-acid polypeptide reads, in one-letter code: Brevinin-1CG1 (69 aa).

Residues 1–22 (MFTMKKSLLLLFFLGTINLSLC) form the signal peptide. The propeptide at 23 to 43 (EQERNAEEERRDDDEMDVEVE) is removed in mature form. Residues Cys63 and Cys69 are joined by a disulfide bond.

In terms of tissue distribution, expressed by the skin glands.

The protein localises to the secreted. In terms of biological role, antimicrobial peptide. Active against Gram-positive bacteria R.rhodochrous X15 and B.licheniformis X39 and against Gram-negative bacterium E.coli ATCC 25922. Has antifungal activity against a slime mold isolate. Has weak hemolytic activity against human erythrocytes. The sequence is that of Brevinin-1CG1 from Amolops chunganensis (Chungan torrent frog).